An 81-amino-acid chain; its full sequence is Photosystem I iron-sulfur center (81 aa).

4Fe-4S ferredoxin-type domains lie at 2 to 31 (SHTV…MVPW) and 37 to 68 (GQIA…VRVY). [4Fe-4S] cluster-binding residues include cysteine 11, cysteine 14, cysteine 17, cysteine 21, cysteine 48, cysteine 51, cysteine 54, and cysteine 58.

The eukaryotic PSI reaction center is composed of at least 11 subunits. [4Fe-4S] cluster is required as a cofactor.

The protein resides in the plastid. The protein localises to the chloroplast thylakoid membrane. The catalysed reaction is reduced [plastocyanin] + hnu + oxidized [2Fe-2S]-[ferredoxin] = oxidized [plastocyanin] + reduced [2Fe-2S]-[ferredoxin]. Functionally, apoprotein for the two 4Fe-4S centers FA and FB of photosystem I (PSI); essential for photochemical activity. FB is the terminal electron acceptor of PSI, donating electrons to ferredoxin. The C-terminus interacts with PsaA/B/D and helps assemble the protein into the PSI complex. Required for binding of PsaD and PsaE to PSI. PSI is a plastocyanin/cytochrome c6-ferredoxin oxidoreductase, converting photonic excitation into a charge separation, which transfers an electron from the donor P700 chlorophyll pair to the spectroscopically characterized acceptors A0, A1, FX, FA and FB in turn. The polypeptide is Photosystem I iron-sulfur center (Thalassiosira pseudonana (Marine diatom)).